The sequence spans 435 residues: tRNA-2-methylthio-N(6)-dimethylallyladenosine synthase (435 aa).

The region spanning 5-120 is the MTTase N-terminal domain; that stretch reads KKLFIETLGC…ISEVLHKERA (116 aa). [4Fe-4S] cluster contacts are provided by Cys-14, Cys-51, Cys-83, Cys-152, Cys-156, and Cys-159. Residues 138-372 enclose the Radical SAM core domain; the sequence is RTSPYKAYIN…NLAVNILDEK (235 aa). In terms of domain architecture, TRAM spans 374 to 435; it reads KTHLGKIYRV…RTILSGEIVG (62 aa).

Belongs to the methylthiotransferase family. MiaB subfamily. In terms of assembly, monomer. It depends on [4Fe-4S] cluster as a cofactor.

Its subcellular location is the cytoplasm. It catalyses the reaction N(6)-dimethylallyladenosine(37) in tRNA + (sulfur carrier)-SH + AH2 + 2 S-adenosyl-L-methionine = 2-methylsulfanyl-N(6)-dimethylallyladenosine(37) in tRNA + (sulfur carrier)-H + 5'-deoxyadenosine + L-methionine + A + S-adenosyl-L-homocysteine + 2 H(+). Functionally, catalyzes the methylthiolation of N6-(dimethylallyl)adenosine (i(6)A), leading to the formation of 2-methylthio-N6-(dimethylallyl)adenosine (ms(2)i(6)A) at position 37 in tRNAs that read codons beginning with uridine. The chain is tRNA-2-methylthio-N(6)-dimethylallyladenosine synthase from Sulfurimonas denitrificans (strain ATCC 33889 / DSM 1251) (Thiomicrospira denitrificans (strain ATCC 33889 / DSM 1251)).